We begin with the raw amino-acid sequence, 69 residues long: Rubredoxin-1 (69 aa).

The 56-residue stretch at 14-69 (QASWMCAECGYIYDPAEGNLETNIRPGMPFDKLPDDWSCPVCNHPKNQFTKFISQL) folds into the Rubredoxin-like domain. Residues Cys19, Cys22, Cys52, and Cys55 each contribute to the Fe cation site.

It belongs to the rubredoxin family. In terms of assembly, monomer. The cofactor is Fe(3+).

Its function is as follows. Serves as an electron acceptor for pyruvate ferredoxin oxidoreductase (PFOR). This chain is Rubredoxin-1 (rub1), found in Chlorobaculum tepidum (strain ATCC 49652 / DSM 12025 / NBRC 103806 / TLS) (Chlorobium tepidum).